A 214-amino-acid chain; its full sequence is Rac-like GTP-binding protein 3 (214 aa).

Position 15–22 (15–22 (GDGAVGKT)) interacts with GTP. The Effector region motif lies at 37–45 (YIPTVFDNF). GTP is bound by residues 62–66 (DTAGQ) and 120–123 (TKLD).

It belongs to the small GTPase superfamily. Rho family. Post-translationally, may be palmitoylated.

The protein resides in the cytoplasm. Its subcellular location is the membrane. Its function is as follows. Inactive GDP-bound Rho GTPases reside in the cytosol, are found in a complex with Rho GDP-dissociation inhibitors (Rho GDIs), and are released from the GDI protein in order to translocate to membranes upon activation. The protein is Rac-like GTP-binding protein 3 (RAC3) of Oryza sativa subsp. japonica (Rice).